Consider the following 873-residue polypeptide: Alanine--tRNA ligase (873 aa).

Positions 563, 567, 664, and 668 each coordinate Zn(2+).

Belongs to the class-II aminoacyl-tRNA synthetase family. The cofactor is Zn(2+).

The protein localises to the cytoplasm. It catalyses the reaction tRNA(Ala) + L-alanine + ATP = L-alanyl-tRNA(Ala) + AMP + diphosphate. Functionally, catalyzes the attachment of alanine to tRNA(Ala) in a two-step reaction: alanine is first activated by ATP to form Ala-AMP and then transferred to the acceptor end of tRNA(Ala). Also edits incorrectly charged Ser-tRNA(Ala) and Gly-tRNA(Ala) via its editing domain. The polypeptide is Alanine--tRNA ligase (Aromatoleum aromaticum (strain DSM 19018 / LMG 30748 / EbN1) (Azoarcus sp. (strain EbN1))).